Reading from the N-terminus, the 166-residue chain is Ribosome maturation factor RimM (166 aa).

A PRC barrel domain is found at 94-166 (EGEYYLGKLI…IELKVLDLLK (73 aa)).

This sequence belongs to the RimM family. Binds ribosomal protein uS19.

Its subcellular location is the cytoplasm. An accessory protein needed during the final step in the assembly of 30S ribosomal subunit, possibly for assembly of the head region. Essential for efficient processing of 16S rRNA. May be needed both before and after RbfA during the maturation of 16S rRNA. It has affinity for free ribosomal 30S subunits but not for 70S ribosomes. This is Ribosome maturation factor RimM from Borreliella burgdorferi (strain ATCC 35210 / DSM 4680 / CIP 102532 / B31) (Borrelia burgdorferi).